We begin with the raw amino-acid sequence, 803 residues long: Bifunctional enzyme MurC/Ddl (803 aa).

The tract at residues 1-446 (MMKSLFYHFI…GEKLRDFEPQ (446 aa)) is UDP-N-acetylmuramate--alanine ligase. Residues 111–117 (GSHGKTT) and 600–655 (VEAF…CKEI) each bind ATP. Positions 447–803 (KLHLGIICGG…SFVDQAFAIQ (357 aa)) are D-alanine--D-alanine ligase. Residues 567 to 778 (KRFMSDLGIP…YEQIVHQLVI (212 aa)) enclose the ATP-grasp domain. Mg(2+) contacts are provided by D732, E745, and N747.

The protein in the N-terminal section; belongs to the MurCDEF family. This sequence in the C-terminal section; belongs to the D-alanine--D-alanine ligase family. Mg(2+) is required as a cofactor. Mn(2+) serves as cofactor.

The protein localises to the cytoplasm. The enzyme catalyses UDP-N-acetyl-alpha-D-muramate + L-alanine + ATP = UDP-N-acetyl-alpha-D-muramoyl-L-alanine + ADP + phosphate + H(+). The catalysed reaction is 2 D-alanine + ATP = D-alanyl-D-alanine + ADP + phosphate + H(+). It functions in the pathway cell wall biogenesis; peptidoglycan biosynthesis. In terms of biological role, cell wall formation. This chain is Bifunctional enzyme MurC/Ddl (murC/ddl), found in Chlamydia trachomatis serovar D (strain ATCC VR-885 / DSM 19411 / UW-3/Cx).